Reading from the N-terminus, the 451-residue chain is Sensor histidine kinase CssS (451 aa).

The Cytoplasmic segment spans residues 1 to 9 (MKNKPLAFQ). The helical transmembrane segment at 10–30 (IWVVISGILLAISILLLVLFS) threads the bilayer. Residues 31–165 (NTLRDFFTNE…RDDLAYTLFK (135 aa)) are Extracellular-facing. Residues 166 to 186 (QLLFIIAVVILLSWIPAIWLA) traverse the membrane as a helical segment. Residues 187-239 (KYLSRPLVSFEKHVKRISEQDWDDPVKVDRKDEIGKLGHTIEEMRQKLVQKDE) form the HAMP domain. The Cytoplasmic portion of the chain corresponds to 187–451 (KYLSRPLVSF…GVTYRIAVPK (265 aa)). The region spanning 247 to 451 (NISHDLKTPV…GVTYRIAVPK (205 aa)) is the Histidine kinase domain. Phosphohistidine; by autocatalysis is present on H250.

The protein localises to the cell membrane. It catalyses the reaction ATP + protein L-histidine = ADP + protein N-phospho-L-histidine.. Functionally, member of the two-component regulatory system CssS/CssR required to control the cellular response to secretion stress. Required for the transcription of htrA. Could detect misfolded proteins at the membrane-cell wall interface and then activate CssR by phosphorylation. The polypeptide is Sensor histidine kinase CssS (cssS) (Bacillus subtilis (strain 168)).